A 250-amino-acid polypeptide reads, in one-letter code: Small ribosomal subunit protein uS3 (250 aa).

The KH type-2 domain occupies 39-107 (VRAALKKRLY…EVHLNIVEIR (69 aa)). The disordered stretch occupies residues 215 to 250 (LDKRLATESGPAGEGGGRERGDRPDRGDRRDRRDRA). Over residues 230 to 250 (GGRERGDRPDRGDRRDRRDRA) the composition is skewed to basic and acidic residues.

This sequence belongs to the universal ribosomal protein uS3 family. As to quaternary structure, part of the 30S ribosomal subunit. Forms a tight complex with proteins S10 and S14.

Binds the lower part of the 30S subunit head. Binds mRNA in the 70S ribosome, positioning it for translation. This chain is Small ribosomal subunit protein uS3, found in Caulobacter vibrioides (strain ATCC 19089 / CIP 103742 / CB 15) (Caulobacter crescentus).